We begin with the raw amino-acid sequence, 209 residues long: Putative NAD(P)H nitroreductase YdgI (209 aa).

Residues 14–16 (RRS), 72–74 (QTQ), 161–162 (GG), and Arg199 contribute to the FMN site.

This sequence belongs to the nitroreductase family. It depends on FMN as a cofactor.

This is Putative NAD(P)H nitroreductase YdgI (ydgI) from Bacillus subtilis (strain 168).